Here is an 865-residue protein sequence, read N- to C-terminus: Bifunctional uridylyltransferase/uridylyl-removing enzyme (865 aa).

The tract at residues 1–318 (MPHVDLNPLK…FPRPDSDARL (318 aa)) is uridylyltransferase. Residues 319–675 (IDDDFRNLRE…VRPTEHGEGL (357 aa)) form a uridylyl-removing region. One can recognise an HD domain in the interval 437-559 (VDQHTLAVVR…VGDERRLAAL (123 aa)). 2 consecutive ACT domains span residues 676–762 (QVMV…RLPH) and 789–865 (RLSV…QQAA). The interval 747 to 767 (DPHAARHAHAPRRLPHSHARR) is disordered. A compositionally biased stretch (basic residues) spans 751 to 767 (ARHAHAPRRLPHSHARR).

It belongs to the GlnD family. Requires Mg(2+) as cofactor.

The catalysed reaction is [protein-PII]-L-tyrosine + UTP = [protein-PII]-uridylyl-L-tyrosine + diphosphate. The enzyme catalyses [protein-PII]-uridylyl-L-tyrosine + H2O = [protein-PII]-L-tyrosine + UMP + H(+). With respect to regulation, uridylyltransferase (UTase) activity is inhibited by glutamine, while glutamine activates uridylyl-removing (UR) activity. Functionally, modifies, by uridylylation and deuridylylation, the PII regulatory proteins (GlnB and homologs), in response to the nitrogen status of the cell that GlnD senses through the glutamine level. Under low glutamine levels, catalyzes the conversion of the PII proteins and UTP to PII-UMP and PPi, while under higher glutamine levels, GlnD hydrolyzes PII-UMP to PII and UMP (deuridylylation). Thus, controls uridylylation state and activity of the PII proteins, and plays an important role in the regulation of nitrogen assimilation and metabolism. In Bordetella parapertussis (strain 12822 / ATCC BAA-587 / NCTC 13253), this protein is Bifunctional uridylyltransferase/uridylyl-removing enzyme.